Consider the following 297-residue polypeptide: 3-methyl-2-oxobutanoate hydroxymethyltransferase (297 aa).

Residues 1 to 15 show a composition bias toward polar residues; that stretch reads MSEQISEQSEQNVYG. The tract at residues 1–40 is disordered; sequence MSEQISEQSEQNVYGASSPVPAGESSPSAASAPRTKVRTH. Residues 16 to 33 show a composition bias toward low complexity; the sequence is ASSPVPAGESSPSAASAP. Residues Asp-78 and Asp-117 each coordinate Mg(2+). Residues 78–79, Asp-117, and Lys-147 contribute to the 3-methyl-2-oxobutanoate site; that span reads DS. Position 149 (Glu-149) interacts with Mg(2+). Residue Glu-215 is the Proton acceptor of the active site.

This sequence belongs to the PanB family. As to quaternary structure, homodecamer; pentamer of dimers. Mg(2+) serves as cofactor.

The protein localises to the cytoplasm. The catalysed reaction is 3-methyl-2-oxobutanoate + (6R)-5,10-methylene-5,6,7,8-tetrahydrofolate + H2O = 2-dehydropantoate + (6S)-5,6,7,8-tetrahydrofolate. The protein operates within cofactor biosynthesis; (R)-pantothenate biosynthesis; (R)-pantoate from 3-methyl-2-oxobutanoate: step 1/2. In terms of biological role, catalyzes the reversible reaction in which hydroxymethyl group from 5,10-methylenetetrahydrofolate is transferred onto alpha-ketoisovalerate to form ketopantoate. The polypeptide is 3-methyl-2-oxobutanoate hydroxymethyltransferase (Mycobacterium marinum (strain ATCC BAA-535 / M)).